The primary structure comprises 60 residues: DNA gyrase inhibitor YacG (60 aa).

Zn(2+)-binding residues include Cys15, Cys18, Cys30, and Cys34.

This sequence belongs to the DNA gyrase inhibitor YacG family. Interacts with GyrB. It depends on Zn(2+) as a cofactor.

In terms of biological role, inhibits all the catalytic activities of DNA gyrase by preventing its interaction with DNA. Acts by binding directly to the C-terminal domain of GyrB, which probably disrupts DNA binding by the gyrase. This is DNA gyrase inhibitor YacG from Bradyrhizobium diazoefficiens (strain JCM 10833 / BCRC 13528 / IAM 13628 / NBRC 14792 / USDA 110).